A 310-amino-acid polypeptide reads, in one-letter code: Homoserine kinase (310 aa).

Position 91–101 (91–101 (PIGSGLGSSAC)) interacts with ATP.

This sequence belongs to the GHMP kinase family. Homoserine kinase subfamily.

Its subcellular location is the cytoplasm. The enzyme catalyses L-homoserine + ATP = O-phospho-L-homoserine + ADP + H(+). Its pathway is amino-acid biosynthesis; L-threonine biosynthesis; L-threonine from L-aspartate: step 4/5. Functionally, catalyzes the ATP-dependent phosphorylation of L-homoserine to L-homoserine phosphate. The protein is Homoserine kinase of Escherichia coli O139:H28 (strain E24377A / ETEC).